The sequence spans 132 residues: Small ribosomal subunit protein uS8 (132 aa).

This sequence belongs to the universal ribosomal protein uS8 family. As to quaternary structure, part of the 30S ribosomal subunit. Contacts proteins S5 and S12.

One of the primary rRNA binding proteins, it binds directly to 16S rRNA central domain where it helps coordinate assembly of the platform of the 30S subunit. This Bacillus pumilus (strain SAFR-032) protein is Small ribosomal subunit protein uS8.